Here is a 486-residue protein sequence, read N- to C-terminus: RAC-beta serine/threonine-protein kinase A (486 aa).

One can recognise a PH domain in the interval 5 to 110 (MVIKEGWLQK…WIIAIQTVAN (106 aa)). O-linked (GlcNAc) serine glycosylation is found at Ser133 and Ser136. Residues 157 to 414 (FDYLKLLGKG…AQEVMSHRFF (258 aa)) enclose the Protein kinase domain. ATP is bound by residues 163 to 171 (LGKGTFGKV) and Lys186. The active-site Proton acceptor is Asp280. A glycan (O-linked (GlcNAc) threonine) is linked at Thr311. The residue at position 314 (Thr314) is a Phosphothreonine. O-linked (GlcNAc) threonine glycosylation is present at Thr318. The 72-residue stretch at 415-486 (VSINWQDVTE…QFSYSASIRE (72 aa)) folds into the AGC-kinase C-terminal domain. The tract at residues 455–486 (LTPPDRYDNLDALESDQRPHFPQFSYSASIRE) is disordered. Positions 459–473 (DRYDNLDALESDQRP) are enriched in basic and acidic residues. Phosphoserine is present on Ser479. O-linked (GlcNAc) serine; alternate glycosylation is present at Ser479.

This sequence belongs to the protein kinase superfamily. AGC Ser/Thr protein kinase family. RAC subfamily. Post-translationally, phosphorylation on Thr-314 and Ser-479 is required for full activity. Phosphorylation of the activation loop at Thr-314 by PDPK1/PDK1 is a prerequisite for full activation. Phosphorylation by mTORC2 at Ser-479 in response to growth factors plays a key role in AKT1 activation by facilitating subsequent phosphorylation of the activation loop by PDPK1/PDK1.

The catalysed reaction is L-seryl-[protein] + ATP = O-phospho-L-seryl-[protein] + ADP + H(+). It carries out the reaction L-threonyl-[protein] + ATP = O-phospho-L-threonyl-[protein] + ADP + H(+). Its activity is regulated as follows. Two specific sites, one in the kinase domain (Thr-314) and the other in the C-terminal regulatory region (Ser-479), need to be phosphorylated for its full activation. Functionally, akt2-a is one of several closely related serine/threonine-protein kinases known as the AKT kinase, and which regulate many processes including metabolism, proliferation, cell survival, growth and angiogenesis. This is mediated through serine and/or threonine phosphorylation of a range of downstream substrates. Over 100 substrate candidates have been reported so far, but for most of them, no isoform specificity has been reported. May be involved in the inhibition of ciliogenesis. This is RAC-beta serine/threonine-protein kinase A (akt2-a) from Xenopus laevis (African clawed frog).